The sequence spans 180 residues: Protein GrpE (180 aa).

It belongs to the GrpE family. As to quaternary structure, homodimer.

The protein localises to the cytoplasm. Its function is as follows. Participates actively in the response to hyperosmotic and heat shock by preventing the aggregation of stress-denatured proteins, in association with DnaK and GrpE. It is the nucleotide exchange factor for DnaK and may function as a thermosensor. Unfolded proteins bind initially to DnaJ; upon interaction with the DnaJ-bound protein, DnaK hydrolyzes its bound ATP, resulting in the formation of a stable complex. GrpE releases ADP from DnaK; ATP binding to DnaK triggers the release of the substrate protein, thus completing the reaction cycle. Several rounds of ATP-dependent interactions between DnaJ, DnaK and GrpE are required for fully efficient folding. The protein is Protein GrpE of Picrophilus torridus (strain ATCC 700027 / DSM 9790 / JCM 10055 / NBRC 100828 / KAW 2/3).